The following is a 318-amino-acid chain: Methenyltetrahydromethanopterin cyclohydrolase (318 aa).

The protein belongs to the MCH family.

It localises to the cytoplasm. The enzyme catalyses 5,10-methenyl-5,6,7,8-tetrahydromethanopterin + H2O = N(5)-formyl-5,6,7,8-tetrahydromethanopterin + H(+). It functions in the pathway one-carbon metabolism; methanogenesis from CO(2); 5,10-methenyl-5,6,7,8-tetrahydromethanopterin from CO(2): step 3/3. In terms of biological role, catalyzes the reversible interconversion of 5-formyl-H(4)MPT to methenyl-H(4)MPT(+). In Methanocella arvoryzae (strain DSM 22066 / NBRC 105507 / MRE50), this protein is Methenyltetrahydromethanopterin cyclohydrolase.